Reading from the N-terminus, the 154-residue chain is Myoglobin (154 aa).

The Globin domain occupies 2-148 (GLSDGEWELV…FRNDIAAKYK (147 aa)). Serine 4 is modified (phosphoserine). Threonine 68 bears the Phosphothreonine mark. Histidine 94 lines the heme b pocket.

Belongs to the globin family. As to quaternary structure, monomeric.

It localises to the cytoplasm. It is found in the sarcoplasm. It carries out the reaction Fe(III)-heme b-[protein] + nitric oxide + H2O = Fe(II)-heme b-[protein] + nitrite + 2 H(+). The catalysed reaction is H2O2 + AH2 = A + 2 H2O. Its function is as follows. Monomeric heme protein which primary function is to store oxygen and facilitate its diffusion within muscle tissues. Reversibly binds oxygen through a pentacoordinated heme iron and enables its timely and efficient release as needed during periods of heightened demand. Depending on the oxidative conditions of tissues and cells, and in addition to its ability to bind oxygen, it also has a nitrite reductase activity whereby it regulates the production of bioactive nitric oxide. Under stress conditions, like hypoxia and anoxia, it also protects cells against reactive oxygen species thanks to its pseudoperoxidase activity. The chain is Myoglobin (MB) from Loxodonta africana (African elephant).